The following is a 960-amino-acid chain: Pentatricopeptide repeat-containing protein At3g63370, chloroplastic (960 aa).

The N-terminal 64 residues, 1 to 64, are a transit peptide targeting the chloroplast; it reads MEYAVTNMRL…PKLACFDGVL (64 aa). PPR repeat units lie at residues 79-109, 115-145, 146-180, 181-215, 216-246, 248-282, 283-317, 319-349, 350-384, 385-419, 420-450, 451-485, 486-516, 520-550, 551-585, 586-620, 621-651, 652-686, 687-717, and 723-753; these read PVEAFAYVLELCGKRRAVSQGRQLHSRIFKT, LDFLAGKLVFMYGKCGSLDDAEKVFDEMPDR, TAFAWNTMIGAYVSNGEPASALALYWNMRVEGVPL, GLSSFPALLKACAKLRDIRSGSELHSLLVKLGYHS, TGFIVNALVSMYAKNDDLSAARRLFDGFQEK, DAVLWNSILSSYSTSGKSLETLELFREMHMTGPAP, NSYTIVSALTACDGFSYAKLGKEIHASVLKSSTHS, ELYVCNALIAMYTRCGKMPQAERILRQMNNA, DVVTWNSLIKGYVQNLMYKEALEFFSDMIAAGHKS, DEVSMTSIIAASGRLSNLLAGMELHAYVIKHGWDS, NLQVGNTLIDMYSKCNLTCYMGRAFLRMHDK, DLISWTTVIAGYAQNDCHVEALELFRDVAKKRMEI, DEMILGSILRASSVLKSMLIVKEIHCHILRK, DTVIQNELVDVYGKCRNMGYATRVFESIKGK, DVVSWTSMISSSALNGNESEAVELFRRMVETGLSA, DSVALLCILSAAASLSALNKGREIHCYLLRKGFCL, EGSIAVAVVDMYACCGDLQSAKAVFDRIERK, GLLQYTSMINAYGMHGCGKAAVELFDKMRHENVSP, DHISFLALLYACSHAGLLDEGRGFLKIMEHE, and WPEHYVCLVDMLGRANCVVEAFEFVKMMKTE. The segment at 758–833 is type E motif; the sequence is VWCALLAACR…HPGCSWIEMD (76 aa). The type E(+) motif stretch occupies residues 834 to 864; sequence GKVHKFTARDKSHPESKEIYEKLSEVTRKLE. The type DYW motif stretch occupies residues 865–960; that stretch reads REVGYVADTK…SGLCSCGDSW (96 aa).

The protein belongs to the PPR family. PCMP-H subfamily.

The protein localises to the plastid. The protein resides in the chloroplast. Its function is as follows. Involved in RNA editing event in chloroplasts. Required for the editing of a single site in rps14 transcript. The chain is Pentatricopeptide repeat-containing protein At3g63370, chloroplastic (PCMP-H83) from Arabidopsis thaliana (Mouse-ear cress).